A 301-amino-acid polypeptide reads, in one-letter code: Prohibitin-2 (301 aa).

Necessary for transcriptional repression stretches follow at residues 19 to 49 and 150 to 174; these read VGTA…GQRA and ASQL…RAKD. Residues 190-237 are a coiled coil; the sequence is SREYTAAVEAKQVAQQEAQRAQFLVEKAKQEQKQKIVQAEGEATAAKM.

The protein belongs to the prohibitin family. In terms of assembly, the mitochondrial prohibitin complex consists of two subunits (PHB1 and PHB2), assembled into a membrane-associated ring-shaped supercomplex of approximately 1 mDa.

It localises to the mitochondrion inner membrane. The protein resides in the cytoplasm. The protein localises to the nucleus. It is found in the cell membrane. In terms of biological role, protein with pleiotropic attributes mediated in a cell-compartment- and tissue-specific manner, which include the plasma membrane-associated cell signaling functions, mitochondrial chaperone, and transcriptional co-regulator of transcription factors and sex steroid hormones in the nucleus. Its function is as follows. In the mitochondria, together with PHB, forms large ring complexes (prohibitin complexes) in the inner mitochondrial membrane (IMM) and functions as a chaperone protein that stabilizes mitochondrial respiratory enzymes and maintains mitochondrial integrity in the IMM, which is required for mitochondrial morphogenesis, neuronal survival, and normal lifespan. Functionally, in the nucleus, serves as transcriptional co-regulator. The sequence is that of Prohibitin-2 (PHB2) from Gallus gallus (Chicken).